The chain runs to 182 residues: Probable RNA 2'-phosphotransferase (182 aa).

It belongs to the KptA/TPT1 family.

In terms of biological role, removes the 2'-phosphate from RNA via an intermediate in which the phosphate is ADP-ribosylated by NAD followed by a presumed transesterification to release the RNA and generate ADP-ribose 1''-2''-cyclic phosphate (APPR&gt;P). May function as an ADP-ribosylase. This is Probable RNA 2'-phosphotransferase from Trichormus variabilis (strain ATCC 29413 / PCC 7937) (Anabaena variabilis).